Reading from the N-terminus, the 747-residue chain is Histone-lysine N-methyltransferase EZH1 (747 aa).

Residues 188-231 (DEEEDGHNDPSDGKQDDSKEDLPVTRKRKRHAIEGNKKSSKKQF) form a disordered region. Over residues 194-211 (HNDPSDGKQDDSKEDLPV) the composition is skewed to basic and acidic residues. A Glycyl lysine isopeptide (Lys-Gly) (interchain with G-Cter in SUMO2) cross-link involves residue Lys327. Residues 368–414 (VSASCSNASASAMAETKEGDSDRDTGNDWASSSSEANSRCQTPTKQK) form a disordered region. Residues 369-381 (SASCSNASASAMA) show a composition bias toward low complexity. Over residues 382-393 (ETKEGDSDRDTG) the composition is skewed to basic and acidic residues. Polar residues predominate over residues 395–414 (DWASSSSEANSRCQTPTKQK). The Nuclear localization signal signature appears at 491-496 (QKKKRK). The region spanning 504 to 606 (CRKIQLKKDN…CKVVSCKNCS (103 aa)) is the CXC domain. The SET domain maps to 613–728 (KHLLLAPSDV…AGEELFFDYR (116 aa)).

This sequence belongs to the class V-like SAM-binding methyltransferase superfamily. Histone-lysine methyltransferase family. EZ subfamily. Component of the PRC2/EED-EZH1 complex, which includes EED, EZH1, SUZ12, RBBP4 and AEBP2. The PRC2/EED-EZH1 is less abundant than the PRC2/EED-EZH2 complex, has weak methyltransferase activity and compacts chromatin in the absence of the methyltransferase cofactor S-adenosyl-L-methionine (SAM). Interacts with EZHIP; the interaction blocks EZH1 methyltransferase activity. Expressed at high levels in kidney, adrenal gland, testis and brain.

The protein resides in the nucleus. It catalyses the reaction L-lysyl(27)-[histone H3] + 3 S-adenosyl-L-methionine = N(6),N(6),N(6)-trimethyl-L-lysyl(27)-[histone H3] + 3 S-adenosyl-L-homocysteine + 3 H(+). In terms of biological role, polycomb group (PcG) protein. Catalytic subunit of the PRC2/EED-EZH1 complex, which methylates 'Lys-27' of histone H3, leading to transcriptional repression of the affected target gene. Able to mono-, di- and trimethylate 'Lys-27' of histone H3 to form H3K27me1, H3K27me2 and H3K27me3, respectively. Required for embryonic stem cell derivation and self-renewal, suggesting that it is involved in safeguarding embryonic stem cell identity. Compared to EZH2-containing complexes, it is less abundant in embryonic stem cells, has weak methyltransferase activity and plays a less critical role in forming H3K27me3, which is required for embryonic stem cell identity and proper differentiation. The sequence is that of Histone-lysine N-methyltransferase EZH1 (Ezh1) from Mus musculus (Mouse).